We begin with the raw amino-acid sequence, 72 residues long: PAMP-induced secreted peptide 1 (72 aa).

An N-terminal signal peptide occupies residues 1–30 (MRRVSWSTVLIVVVMVSLFFVEHVVVPAAA). 2 positions are modified to 4-hydroxyproline: proline 65 and proline 67.

Contains 4-hydroxyproline; hydroxylated on Pro-65 and Pro-67. In terms of tissue distribution, expressed in guard cells, hydathodes, leaf trichomes, and vascular tissues of leaves and roots.

The protein localises to the secreted. Its subcellular location is the extracellular space. It is found in the apoplast. Functionally, endogenous secreted peptide that acts as elicitor of immune response and positive regulator of defense response. Amplifies the immune response triggered by flg22, the active epitope of bacterial flagellin. Acts as a negative regulator of root growth. This is PAMP-induced secreted peptide 1 from Arabidopsis thaliana (Mouse-ear cress).